The chain runs to 153 residues: Mitochondrial fission 1 protein (153 aa).

Over 1-124 (MTQLPYAVDA…LIDDKVTKEG (124 aa)) the chain is Cytoplasmic. One copy of the TPR repeat lies at 73–106 (RECLYYLALGNYKLGNYAQARKYNDALLENEPAN). Residues 125-145 (LMGVAIISGVAVAAGVIGGVL) traverse the membrane as a helical segment. Topologically, residues 146-153 (LRNLGRKR) are mitochondrial intermembrane.

It belongs to the FIS1 family.

It localises to the mitochondrion outer membrane. In terms of biological role, has a role in mitochondrial fission. Has a role in outer membrane fission but not matrix separation. The polypeptide is Mitochondrial fission 1 protein (mtp-2) (Neurospora crassa (strain ATCC 24698 / 74-OR23-1A / CBS 708.71 / DSM 1257 / FGSC 987)).